Consider the following 317-residue polypeptide: Methionyl-tRNA formyltransferase (317 aa).

117-120 (SLLP) lines the (6S)-5,6,7,8-tetrahydrofolate pocket.

The protein belongs to the Fmt family.

It catalyses the reaction L-methionyl-tRNA(fMet) + (6R)-10-formyltetrahydrofolate = N-formyl-L-methionyl-tRNA(fMet) + (6S)-5,6,7,8-tetrahydrofolate + H(+). Attaches a formyl group to the free amino group of methionyl-tRNA(fMet). The formyl group appears to play a dual role in the initiator identity of N-formylmethionyl-tRNA by promoting its recognition by IF2 and preventing the misappropriation of this tRNA by the elongation apparatus. This is Methionyl-tRNA formyltransferase from Herminiimonas arsenicoxydans.